The chain runs to 392 residues: 8-amino-7-oxononanoate synthase (392 aa).

Arg26 provides a ligand contact to substrate. 112–113 (GF) lines the pyridoxal 5'-phosphate pocket. Residue His137 coordinates substrate. Pyridoxal 5'-phosphate-binding residues include Ser187, His215, and Thr241. Lys244 bears the N6-(pyridoxal phosphate)lysine mark. Thr357 lines the substrate pocket.

It belongs to the class-II pyridoxal-phosphate-dependent aminotransferase family. BioF subfamily. In terms of assembly, homodimer. It depends on pyridoxal 5'-phosphate as a cofactor.

The catalysed reaction is 6-carboxyhexanoyl-[ACP] + L-alanine + H(+) = (8S)-8-amino-7-oxononanoate + holo-[ACP] + CO2. The protein operates within cofactor biosynthesis; biotin biosynthesis. Catalyzes the decarboxylative condensation of pimeloyl-[acyl-carrier protein] and L-alanine to produce 8-amino-7-oxononanoate (AON), [acyl-carrier protein], and carbon dioxide. In Photobacterium profundum (strain SS9), this protein is 8-amino-7-oxononanoate synthase.